Here is a 599-residue protein sequence, read N- to C-terminus: 2-succinyl-5-enolpyruvyl-6-hydroxy-3-cyclohexene-1-carboxylate synthase (599 aa).

The segment covering 1 to 21 has biased composition (low complexity); it reads MTSENPLDPNNAYAAADDAPL. The disordered stretch occupies residues 1 to 35; that stretch reads MTSENPLDPNNAYAAADDAPLSEGDPTGAPADSGS.

The protein belongs to the TPP enzyme family. MenD subfamily. As to quaternary structure, homodimer. Mg(2+) serves as cofactor. Requires Mn(2+) as cofactor. Thiamine diphosphate is required as a cofactor.

The catalysed reaction is isochorismate + 2-oxoglutarate + H(+) = 5-enolpyruvoyl-6-hydroxy-2-succinyl-cyclohex-3-ene-1-carboxylate + CO2. It participates in quinol/quinone metabolism; 1,4-dihydroxy-2-naphthoate biosynthesis; 1,4-dihydroxy-2-naphthoate from chorismate: step 2/7. The protein operates within quinol/quinone metabolism; menaquinone biosynthesis. Functionally, catalyzes the thiamine diphosphate-dependent decarboxylation of 2-oxoglutarate and the subsequent addition of the resulting succinic semialdehyde-thiamine pyrophosphate anion to isochorismate to yield 2-succinyl-5-enolpyruvyl-6-hydroxy-3-cyclohexene-1-carboxylate (SEPHCHC). The chain is 2-succinyl-5-enolpyruvyl-6-hydroxy-3-cyclohexene-1-carboxylate synthase from Arthrobacter sp. (strain FB24).